The primary structure comprises 598 residues: DNA mismatch repair protein MutL (598 aa).

The protein belongs to the DNA mismatch repair MutL/HexB family.

Functionally, this protein is involved in the repair of mismatches in DNA. It is required for dam-dependent methyl-directed DNA mismatch repair. May act as a 'molecular matchmaker', a protein that promotes the formation of a stable complex between two or more DNA-binding proteins in an ATP-dependent manner without itself being part of a final effector complex. In Thiobacillus denitrificans (strain ATCC 25259 / T1), this protein is DNA mismatch repair protein MutL.